We begin with the raw amino-acid sequence, 354 residues long: Hyaluronan and proteoglycan link protein 1 (354 aa).

Residues 1 to 15 (MKSLLLLVLISICGA) constitute a propeptide that is removed on maturation. N-linked (GlcNAc...) asparagine glycans are attached at residues asparagine 21 and asparagine 56. Residues 38–152 (PRLLVEAEQA…EGLEDDTAVV (115 aa)) enclose the Ig-like V-type domain. Disulfide bonds link cysteine 61/cysteine 139, cysteine 181/cysteine 252, cysteine 205/cysteine 226, cysteine 279/cysteine 349, and cysteine 304/cysteine 325. 2 consecutive Link domains span residues 159-254 (VVFP…FCFT) and 259-351 (GRFY…YCFR).

It belongs to the HAPLN family.

It localises to the secreted. Its subcellular location is the extracellular space. The protein resides in the extracellular matrix. Its function is as follows. Stabilizes the aggregates of proteoglycan monomers with hyaluronic acid in the extracellular cartilage matrix. The sequence is that of Hyaluronan and proteoglycan link protein 1 (HAPLN1) from Equus caballus (Horse).